We begin with the raw amino-acid sequence, 795 residues long: Lon protease 1 (795 aa).

Positions 9 to 204 (LPVLPLRNTV…RVLALLLRDL (196 aa)) constitute a Lon N-terminal domain. 360-367 (GPPGVGKT) is a binding site for ATP. Residues 596 to 777 (EPQVGAAQGL…GEVLKLLLLP (182 aa)) form the Lon proteolytic domain. Active-site residues include S683 and K726.

The protein belongs to the peptidase S16 family. Homohexamer. Organized in a ring with a central cavity.

The protein localises to the cytoplasm. It carries out the reaction Hydrolysis of proteins in presence of ATP.. Its function is as follows. ATP-dependent serine protease that mediates the selective degradation of mutant and abnormal proteins as well as certain short-lived regulatory proteins. Required for cellular homeostasis and for survival from DNA damage and developmental changes induced by stress. Degrades polypeptides processively to yield small peptide fragments that are 5 to 10 amino acids long. Binds to DNA in a double-stranded, site-specific manner. The protein is Lon protease 1 of Thermus thermophilus (strain ATCC BAA-163 / DSM 7039 / HB27).